The following is a 504-amino-acid chain: L-carnitine/gamma-butyrobetaine antiporter (504 aa).

The next 12 membrane-spanning stretches (helical) occupy residues 10–30 (MEPK…WLTV), 51–71 (WGWA…WLVF), 92–112 (IFMM…SIEI), 143–163 (GPLP…FFFV), 195–215 (FYLV…TPLV), 231–251 (LDAI…ACGL), 263–283 (SYLS…SFIM), 316–336 (WSVF…IFLA), 347–367 (LCFG…TVLG), 398–418 (WAAL…CFIA), 446–466 (LLVR…LLAL), and 475–495 (AIIA…LSFI).

The protein belongs to the BCCT transporter (TC 2.A.15) family. CaiT subfamily. Homotrimer.

Its subcellular location is the cell inner membrane. The enzyme catalyses 4-(trimethylamino)butanoate(in) + (R)-carnitine(out) = 4-(trimethylamino)butanoate(out) + (R)-carnitine(in). Its pathway is amine and polyamine metabolism; carnitine metabolism. In terms of biological role, catalyzes the exchange of L-carnitine for gamma-butyrobetaine. In Shigella dysenteriae serotype 1 (strain Sd197), this protein is L-carnitine/gamma-butyrobetaine antiporter.